Here is a 396-residue protein sequence, read N- to C-terminus: MQDSSLNNYANHKNFILMLIILFLMEFARGMYILSYINFLPTVTSIAVAITSLAFSIHFIADASTNFVIGFLLKKFGTKIVLTTGFILAFTSLFLVIWFPASPFVIIFSAMMLGIAVSPIWVIMLSSVEEDKRGKQMGYVYFSWLLGLLVGMVFMNLLIKVHPTRFAFMMSLVVLIAWILYYFVDVKLTNYNTRPVKAQLRQIVDVTKRHLLLFPGILLQGAAIAALVPILPTYATKVINVSTIEYTVAIIIGGIGCAVSMLFLSKLIDNRSRNFMYGVILSGFILYMILIFTLSMIVNIHIVWIIALAIGLMYGILLPAWNTFMARFIKSDEQEETWGVFNSIQGFGSMIGPLFGGLITQFTNDLNNTFYFSALIFLVLAVFYGSYFIANREKAK.

The next 12 membrane-spanning stretches (helical) occupy residues 15–34 (FILM…MYIL), 46–73 (IAVA…GFLL), 80–99 (IVLT…VIWF), 105–126 (VIIF…IMLS), 138–159 (GYVY…NLLI), 165–184 (RFAF…YYFV), 211–231 (LLLF…VPIL), 243–264 (TIEY…MLFL), 276–298 (MYGV…SMIV), 304–326 (WIIA…TFMA), 338–358 (WGVF…FGGL), and 370–390 (FYFS…YFIA).

It belongs to the major facilitator superfamily. LtaA family.

It localises to the cell membrane. It participates in cell wall biogenesis; lipoteichoic acid biosynthesis. Proton-coupled antiporter flippase that catalyzes the translocation, from the inner to the outer leaflet of the cell membrane, of the lipid-linked disaccharide (anchor-LLD) that anchors lipoteichoic acids (LTA) to the cell membrane. This chain is Proton-coupled antiporter flippase LtaA (ltaA), found in Staphylococcus aureus (strain Mu50 / ATCC 700699).